The following is a 1331-amino-acid chain: DNA replication ATP-dependent helicase/nuclease JHS1 (1331 aa).

The interval 1-98 (MPPRKKPKSS…DMDQQLTEAS (98 aa)) is disordered. The Nuclear localization signal motif lies at 2–8 (PPRKKPK). Positions 11 to 31 (ALKSNKQSSANHSSQPSTFGI) are enriched in polar residues. A compositionally biased stretch (low complexity) spans 40-52 (QNSQSTSNSHTST). The span at 57–81 (DQQNVNGLASDTAVLTPQNPLGTSN) shows a compositional bias: polar residues. Positions 82–91 (EKPDESKDMD) are enriched in basic and acidic residues. The segment at 362 to 811 (ECALYLWDEW…CKLRTGDRVI (450 aa)) is nuclease activity. Positions 422, 666, 669, and 675 each coordinate [4Fe-4S] cluster. The tract at residues 812–1331 (LRTEVSHLTV…LNLLPGDLKP (520 aa)) is helicase activity. The region spanning 924–1271 (NNDQRQAILK…VRSREKPRSS (348 aa)) is the UvrD-like helicase ATP-binding domain. 945–952 (GMPGTGKT) is an ATP binding site.

Belongs to the DNA2/NAM7 helicase family. [4Fe-4S] cluster is required as a cofactor. As to expression, strongly expressed in meristems, including both root and shoot apical meristems (RAM and SAM). Also present in the vasculature and in young floral tissues.

It localises to the nucleus. The protein resides in the chromosome. It carries out the reaction ATP + H2O = ADP + phosphate + H(+). Essential protein required during embryogenesis. Key enzyme involved in DNA replication and damage repair, shoot apical meristem (SAM) maintenance, and development. Involved in Okazaki fragments processing. Possesses different enzymatic activities, such as single-stranded DNA (ssDNA)-dependent ATPase, 5'-3' helicase and endonuclease activities. While the ATPase and endonuclease activities are well-defined and play a key role in Okazaki fragments processing and DSB repair, the 5'-3' DNA helicase activity is atypical: it cannot load onto its tracking strand internally and has an absolute free 5'-end requirement. In Arabidopsis thaliana (Mouse-ear cress), this protein is DNA replication ATP-dependent helicase/nuclease JHS1.